We begin with the raw amino-acid sequence, 209 residues long: Small ribosomal subunit protein uS4 (209 aa).

The 67-residue stretch at 98–164 (RRLDNVVYRL…LPVKNAIELN (67 aa)) folds into the S4 RNA-binding domain.

Belongs to the universal ribosomal protein uS4 family. As to quaternary structure, part of the 30S ribosomal subunit. Contacts protein S5. The interaction surface between S4 and S5 is involved in control of translational fidelity.

Its function is as follows. One of the primary rRNA binding proteins, it binds directly to 16S rRNA where it nucleates assembly of the body of the 30S subunit. In terms of biological role, with S5 and S12 plays an important role in translational accuracy. In Thermosipho africanus (strain TCF52B), this protein is Small ribosomal subunit protein uS4.